The sequence spans 365 residues: Flagellar P-ring protein (365 aa).

The N-terminal stretch at 1-21 (MKSLRLVALFCCLLPLGMAHA) is a signal peptide.

The protein belongs to the FlgI family. In terms of assembly, the basal body constitutes a major portion of the flagellar organelle and consists of four rings (L,P,S, and M) mounted on a central rod.

It localises to the periplasm. Its subcellular location is the bacterial flagellum basal body. In terms of biological role, assembles around the rod to form the L-ring and probably protects the motor/basal body from shearing forces during rotation. The chain is Flagellar P-ring protein from Aeromonas hydrophila subsp. hydrophila (strain ATCC 7966 / DSM 30187 / BCRC 13018 / CCUG 14551 / JCM 1027 / KCTC 2358 / NCIMB 9240 / NCTC 8049).